Consider the following 309-residue polypeptide: MFSPADNIFIILITGEFIIGILGNGYIGLVNWIDWIKKKKISTIDCILTNLVISRICLISVMVVNGIVIVLYPDVYTKTKLQIVICTFWTFANYLNMWFTACLNVFYSLKVANSSHPLFLWLKRKIDMVVRWILLGCFAISLLVSLIIATVLSHDYRFHAIAKHKRNVTEMFHVSKMPYFEPLTLFNLLAIVPFIVSLMSFFLLVRSLWRHTKQIKLYATGGRDPSTEAHVRAIKTMTLLIFFFFLYYITSLLVXFSYLITNYKLAMAFGEIVAILYPSGHSLILIILNNKLRQASVRMLTCRKIACVT.

Topologically, residues 1-7 (MFSPADN) are extracellular. The helical transmembrane segment at 8–28 (IFIILITGEFIIGILGNGYIG) threads the bilayer. At 29-50 (LVNWIDWIKKKKISTIDCILTN) the chain is on the cytoplasmic side. A helical membrane pass occupies residues 51–71 (LVISRICLISVMVVNGIVIVL). Residues 72–82 (YPDVYTKTKLQ) lie on the Extracellular side of the membrane. Residues 83–103 (IVICTFWTFANYLNMWFTACL) form a helical membrane-spanning segment. The Cytoplasmic portion of the chain corresponds to 104 to 131 (NVFYSLKVANSSHPLFLWLKRKIDMVVR). Residues 132–152 (WILLGCFAISLLVSLIIATVL) form a helical membrane-spanning segment. Topologically, residues 153 to 184 (SHDYRFHAIAKHKRNVTEMFHVSKMPYFEPLT) are extracellular. Residue N167 is glycosylated (N-linked (GlcNAc...) asparagine). A helical transmembrane segment spans residues 185–205 (LFNLLAIVPFIVSLMSFFLLV). Topologically, residues 206-239 (RSLWRHTKQIKLYATGGRDPSTEAHVRAIKTMTL) are cytoplasmic. A helical transmembrane segment spans residues 240 to 260 (LIFFFFLYYITSLLVXFSYLI). At 261–266 (TNYKLA) the chain is on the extracellular side. The chain crosses the membrane as a helical span at residues 267–287 (MAFGEIVAILYPSGHSLILII). Over 288-309 (LNNKLRQASVRMLTCRKIACVT) the chain is Cytoplasmic.

This sequence belongs to the G-protein coupled receptor T2R family.

It is found in the membrane. Its function is as follows. Receptor that may play a role in the perception of bitterness and is gustducin-linked. May play a role in sensing the chemical composition of the gastrointestinal content. The activity of this receptor may stimulate alpha gustducin, mediate PLC-beta-2 activation and lead to the gating of TRPM5. This chain is Taste receptor type 2 member 8 (TAS2R8), found in Papio hamadryas (Hamadryas baboon).